A 154-amino-acid polypeptide reads, in one-letter code: Myoglobin (154 aa).

In terms of domain architecture, Globin spans 2 to 148; it reads GLSDAEWQLV…FRNDIAAQYK (147 aa). At S4 the chain carries Phosphoserine. H65 provides a ligand contact to nitrite. H65 lines the O2 pocket. At T68 the chain carries Phosphothreonine. Residue H94 coordinates heme b.

It belongs to the globin family. As to quaternary structure, monomeric.

The protein localises to the cytoplasm. Its subcellular location is the sarcoplasm. It catalyses the reaction Fe(III)-heme b-[protein] + nitric oxide + H2O = Fe(II)-heme b-[protein] + nitrite + 2 H(+). The catalysed reaction is H2O2 + AH2 = A + 2 H2O. Its function is as follows. Monomeric heme protein which primary function is to store oxygen and facilitate its diffusion within muscle tissues. Reversibly binds oxygen through a pentacoordinated heme iron and enables its timely and efficient release as needed during periods of heightened demand. Depending on the oxidative conditions of tissues and cells, and in addition to its ability to bind oxygen, it also has a nitrite reductase activity whereby it regulates the production of bioactive nitric oxide. Under stress conditions, like hypoxia and anoxia, it also protects cells against reactive oxygen species thanks to its pseudoperoxidase activity. This Oryctolagus cuniculus (Rabbit) protein is Myoglobin (MB).